A 256-amino-acid chain; its full sequence is MSREENVYMAKLAEQAERYEEMVEYMEKVAKTVDVEELTVEERNLLSVAYKNVIGARRASWRIVSSIEQKEEGRGNEEHVTLIKEYRGKIEAELSKICDGILKLLDSHLVPSSTAAESKVFYLKMKGDYHRYLAEFKTGAERKEAAESTMVAYKAAQDIALADLAPTHPIRLGLALNFSVFYYEILNSPDKACNLAKQAFDEAISELDTLGEESYKDSTLIMQLLRDNLTLWTSDLTEDGGDEVKEASKGDACEGQ.

The protein belongs to the 14-3-3 family. As to quaternary structure, may form a complex with the transcriptional activator VP1 and the bZIP transcription factor EMBP1. Expressed in seedlings, internodes and panicles.

Its subcellular location is the cytoplasm. The protein resides in the nucleus. Functionally, is associated with a DNA binding complex that binds to the G box, a well-characterized cis-acting DNA regulatory element found in plant genes. The chain is 14-3-3-like protein GF14-C (GF14C) from Oryza sativa subsp. japonica (Rice).